Consider the following 363-residue polypeptide: Dihydroorotate dehydrogenase (quinone) (363 aa).

FMN contacts are provided by residues 67–71 and threonine 91; that span reads AGFDK. Lysine 71 serves as a coordination point for substrate. Substrate is bound at residue 116–120; sequence NRMGF. Positions 156 and 189 each coordinate FMN. Residue asparagine 189 coordinates substrate. Serine 192 acts as the Nucleophile in catalysis. Residue asparagine 194 participates in substrate binding. FMN is bound by residues lysine 231 and threonine 259. 260-261 contacts substrate; sequence NT. Residues glycine 287, glycine 316, and 337 to 338 contribute to the FMN site; that span reads YT.

The protein belongs to the dihydroorotate dehydrogenase family. Type 2 subfamily. In terms of assembly, monomer. It depends on FMN as a cofactor.

The protein resides in the cell membrane. The enzyme catalyses (S)-dihydroorotate + a quinone = orotate + a quinol. It participates in pyrimidine metabolism; UMP biosynthesis via de novo pathway; orotate from (S)-dihydroorotate (quinone route): step 1/1. Functionally, catalyzes the conversion of dihydroorotate to orotate with quinone as electron acceptor. The protein is Dihydroorotate dehydrogenase (quinone) of Kocuria rhizophila (strain ATCC 9341 / DSM 348 / NBRC 103217 / DC2201).